We begin with the raw amino-acid sequence, 270 residues long: F420 non-reducing hydrogenase II cytochrome subunit (270 aa).

A run of 5 helical transmembrane segments spans residues 27–47 (AIAMIVLIITGLKIYAGWEFM), 57–77 (MIAVPFLLAVNWILIPYNIFS), 139–159 (ILIPLEGLALFLITVSGIVLY), 173–193 (WIISISGMIAPTFGMTPVGFL), and 195–215 (VLHLLMTYWFIFELVVHVGIL).

The protein belongs to the HupC/HyaC/HydC family. As to quaternary structure, composed of a large subunit (VhtA), a small subunit (VhtG) and a cytochrome subunit (VhtC). Heme b serves as cofactor.

It localises to the cell membrane. The enzyme catalyses methanophenazine + H2 = dihydromethanophenazine. Part of the F420 non-reducing hydrogenase II complex that catalyzes the reduction of methanophenazine to dihydromethanophenazine. The chain is F420 non-reducing hydrogenase II cytochrome subunit from Methanosarcina mazei (strain ATCC BAA-159 / DSM 3647 / Goe1 / Go1 / JCM 11833 / OCM 88) (Methanosarcina frisia).